A 331-amino-acid polypeptide reads, in one-letter code: DNA-directed RNA polymerase subunit alpha (331 aa).

Positions 1–237 (MQSFEKEFLK…DQLSSFIDLK (237 aa)) are alpha N-terminal domain (alpha-NTD). An alpha C-terminal domain (alpha-CTD) region spans residues 251–331 (FDPSLLNLVD…NWPPKHLSEQ (81 aa)).

It belongs to the RNA polymerase alpha chain family. Homodimer. The RNAP catalytic core consists of 2 alpha, 1 beta, 1 beta' and 1 omega subunit. When a sigma factor is associated with the core the holoenzyme is formed, which can initiate transcription.

It catalyses the reaction RNA(n) + a ribonucleoside 5'-triphosphate = RNA(n+1) + diphosphate. Functionally, DNA-dependent RNA polymerase catalyzes the transcription of DNA into RNA using the four ribonucleoside triphosphates as substrates. The polypeptide is DNA-directed RNA polymerase subunit alpha (Blochmanniella floridana).